The primary structure comprises 338 residues: Lipoate-protein ligase A (338 aa).

The BPL/LPL catalytic domain maps to 29–216; the sequence is PATQRVLFLW…AFFAHYGERV (188 aa). ATP-binding positions include Arg-71, 76-79, and Lys-134; that span reads GAVF. Lys-134 is a binding site for (R)-lipoate.

This sequence belongs to the LplA family. As to quaternary structure, monomer.

The protein localises to the cytoplasm. It carries out the reaction L-lysyl-[lipoyl-carrier protein] + (R)-lipoate + ATP = N(6)-[(R)-lipoyl]-L-lysyl-[lipoyl-carrier protein] + AMP + diphosphate + H(+). Its pathway is protein modification; protein lipoylation via exogenous pathway; protein N(6)-(lipoyl)lysine from lipoate: step 1/2. The protein operates within protein modification; protein lipoylation via exogenous pathway; protein N(6)-(lipoyl)lysine from lipoate: step 2/2. Catalyzes both the ATP-dependent activation of exogenously supplied lipoate to lipoyl-AMP and the transfer of the activated lipoyl onto the lipoyl domains of lipoate-dependent enzymes. This is Lipoate-protein ligase A from Salmonella paratyphi C (strain RKS4594).